The following is a 220-amino-acid chain: Redox-sensing transcriptional repressor Rex (220 aa).

Residues tryptophan 25–valine 64 constitute a DNA-binding region (H-T-H motif). Glycine 99–glycine 104 is an NAD(+) binding site.

Belongs to the transcriptional regulatory Rex family. Homodimer.

The protein localises to the cytoplasm. Its function is as follows. Modulates transcription in response to changes in cellular NADH/NAD(+) redox state. In Bacteroides fragilis (strain ATCC 25285 / DSM 2151 / CCUG 4856 / JCM 11019 / LMG 10263 / NCTC 9343 / Onslow / VPI 2553 / EN-2), this protein is Redox-sensing transcriptional repressor Rex.